Reading from the N-terminus, the 476-residue chain is Sedoheptulokinase (476 aa).

Belongs to the FGGY kinase family.

It localises to the cytoplasm. It catalyses the reaction sedoheptulose + ATP = D-sedoheptulose 7-phosphate + ADP + H(+). In terms of biological role, acts as a modulator of macrophage activation through control of glucose metabolism. In Mus musculus (Mouse), this protein is Sedoheptulokinase (Shpk).